Here is a 371-residue protein sequence, read N- to C-terminus: UDP-N-acetylglucosamine--N-acetylmuramyl-(pentapeptide) pyrophosphoryl-undecaprenol N-acetylglucosamine transferase (371 aa).

Residues 10-12, asparagine 122, arginine 166, serine 196, and glutamine 301 contribute to the UDP-N-acetyl-alpha-D-glucosamine site; that span reads TGG.

Belongs to the glycosyltransferase 28 family. MurG subfamily.

It localises to the cell inner membrane. It catalyses the reaction di-trans,octa-cis-undecaprenyl diphospho-N-acetyl-alpha-D-muramoyl-L-alanyl-D-glutamyl-meso-2,6-diaminopimeloyl-D-alanyl-D-alanine + UDP-N-acetyl-alpha-D-glucosamine = di-trans,octa-cis-undecaprenyl diphospho-[N-acetyl-alpha-D-glucosaminyl-(1-&gt;4)]-N-acetyl-alpha-D-muramoyl-L-alanyl-D-glutamyl-meso-2,6-diaminopimeloyl-D-alanyl-D-alanine + UDP + H(+). It participates in cell wall biogenesis; peptidoglycan biosynthesis. Functionally, cell wall formation. Catalyzes the transfer of a GlcNAc subunit on undecaprenyl-pyrophosphoryl-MurNAc-pentapeptide (lipid intermediate I) to form undecaprenyl-pyrophosphoryl-MurNAc-(pentapeptide)GlcNAc (lipid intermediate II). The chain is UDP-N-acetylglucosamine--N-acetylmuramyl-(pentapeptide) pyrophosphoryl-undecaprenol N-acetylglucosamine transferase from Halothermothrix orenii (strain H 168 / OCM 544 / DSM 9562).